Consider the following 121-residue polypeptide: Keratin-associated protein 1-4 (121 aa).

The protein belongs to the KRTAP type 1 family. In terms of assembly, interacts with hair keratins. Expressed in the middle/upper portions of the hair cortex, in the region termed the keratogenous zone.

Functionally, in the hair cortex, hair keratin intermediate filaments are embedded in an interfilamentous matrix, consisting of hair keratin-associated proteins (KRTAP), which are essential for the formation of a rigid and resistant hair shaft through their extensive disulfide bond cross-linking with abundant cysteine residues of hair keratins. The matrix proteins include the high-sulfur and high-glycine-tyrosine keratins. In Homo sapiens (Human), this protein is Keratin-associated protein 1-4 (KRTAP1-4).